The primary structure comprises 429 residues: Enolase (429 aa).

(2R)-2-phosphoglycerate is bound at residue Gln-164. Glu-206 (proton donor) is an active-site residue. Asp-243, Glu-286, and Asp-313 together coordinate Mg(2+). Positions 338, 367, 368, and 389 each coordinate (2R)-2-phosphoglycerate. Residue Lys-338 is the Proton acceptor of the active site.

The protein belongs to the enolase family. The cofactor is Mg(2+).

Its subcellular location is the cytoplasm. The protein resides in the secreted. It localises to the cell surface. The enzyme catalyses (2R)-2-phosphoglycerate = phosphoenolpyruvate + H2O. It functions in the pathway carbohydrate degradation; glycolysis; pyruvate from D-glyceraldehyde 3-phosphate: step 4/5. Functionally, catalyzes the reversible conversion of 2-phosphoglycerate (2-PG) into phosphoenolpyruvate (PEP). It is essential for the degradation of carbohydrates via glycolysis. In Thermotoga sp. (strain RQ2), this protein is Enolase.